The following is a 346-amino-acid chain: UDP-3-O-acylglucosamine N-acyltransferase (346 aa).

H253 functions as the Proton acceptor in the catalytic mechanism.

Belongs to the transferase hexapeptide repeat family. LpxD subfamily. In terms of assembly, homotrimer.

The catalysed reaction is a UDP-3-O-[(3R)-3-hydroxyacyl]-alpha-D-glucosamine + a (3R)-hydroxyacyl-[ACP] = a UDP-2-N,3-O-bis[(3R)-3-hydroxyacyl]-alpha-D-glucosamine + holo-[ACP] + H(+). The protein operates within bacterial outer membrane biogenesis; LPS lipid A biosynthesis. Functionally, catalyzes the N-acylation of UDP-3-O-acylglucosamine using 3-hydroxyacyl-ACP as the acyl donor. Is involved in the biosynthesis of lipid A, a phosphorylated glycolipid that anchors the lipopolysaccharide to the outer membrane of the cell. The protein is UDP-3-O-acylglucosamine N-acyltransferase of Rickettsia felis (strain ATCC VR-1525 / URRWXCal2) (Rickettsia azadi).